The sequence spans 284 residues: 2-dehydro-3-deoxyphosphooctonate aldolase (284 aa).

It belongs to the KdsA family.

Its subcellular location is the cytoplasm. It catalyses the reaction D-arabinose 5-phosphate + phosphoenolpyruvate + H2O = 3-deoxy-alpha-D-manno-2-octulosonate-8-phosphate + phosphate. It functions in the pathway carbohydrate biosynthesis; 3-deoxy-D-manno-octulosonate biosynthesis; 3-deoxy-D-manno-octulosonate from D-ribulose 5-phosphate: step 2/3. The protein operates within bacterial outer membrane biogenesis; lipopolysaccharide biosynthesis. The polypeptide is 2-dehydro-3-deoxyphosphooctonate aldolase (Escherichia coli O6:K15:H31 (strain 536 / UPEC)).